Consider the following 215-residue polypeptide: Ras-related protein Rab-5B (215 aa).

Positions 29, 30, 32, 33, 34, 35, 46, 47, 52, 78, 133, 134, 136, 164, and 165 each coordinate GTP. Serine 34 contacts Mg(2+). Short sequence motifs (switch) lie at residues 44-56 and 77-93; these read QFHEYQESTIGAA and AGQERYHSLAPMYYRGA. A Mg(2+)-binding site is contributed by threonine 52. Residues 184–215 form a disordered region; that stretch reads SEPQSTSGAAGRSRGVDLHEQTQQNKSQCCSN. Residues 204 to 215 show a composition bias toward polar residues; it reads QTQQNKSQCCSN. 2 S-geranylgeranyl cysteine lipidation sites follow: cysteine 212 and cysteine 213.

The protein belongs to the small GTPase superfamily. Rab family. Requires Mg(2+) as cofactor.

The protein localises to the cell membrane. It localises to the early endosome membrane. It carries out the reaction GTP + H2O = GDP + phosphate + H(+). With respect to regulation, regulated by guanine nucleotide exchange factors (GEFs) which promote the exchange of bound GDP for free GTP. Regulated by GTPase activating proteins (GAPs) which increase the GTP hydrolysis activity. Inhibited by GDP dissociation inhibitors (GDIs). In terms of biological role, the small GTPases Rab are key regulators of intracellular membrane trafficking, from the formation of transport vesicles to their fusion with membranes. Rabs cycle between an inactive GDP-bound form and an active GTP-bound form that is able to recruit to membranes different sets of downstream effectors directly responsible for vesicle formation, movement, tethering and fusion. This Gallus gallus (Chicken) protein is Ras-related protein Rab-5B (RAB5B).